Consider the following 277-residue polypeptide: 3-methyl-2-oxobutanoate hydroxymethyltransferase (277 aa).

Mg(2+) contacts are provided by Asp53 and Asp96. 3-methyl-2-oxobutanoate is bound by residues 53–54, Asp96, and Lys126; that span reads DS. Residue Glu128 coordinates Mg(2+). Glu195 functions as the Proton acceptor in the catalytic mechanism.

The protein belongs to the PanB family. Homodecamer; pentamer of dimers. The cofactor is Mg(2+).

It is found in the cytoplasm. It carries out the reaction 3-methyl-2-oxobutanoate + (6R)-5,10-methylene-5,6,7,8-tetrahydrofolate + H2O = 2-dehydropantoate + (6S)-5,6,7,8-tetrahydrofolate. Its pathway is cofactor biosynthesis; (R)-pantothenate biosynthesis; (R)-pantoate from 3-methyl-2-oxobutanoate: step 1/2. In terms of biological role, catalyzes the reversible reaction in which hydroxymethyl group from 5,10-methylenetetrahydrofolate is transferred onto alpha-ketoisovalerate to form ketopantoate. The sequence is that of 3-methyl-2-oxobutanoate hydroxymethyltransferase from Chlorobaculum tepidum (strain ATCC 49652 / DSM 12025 / NBRC 103806 / TLS) (Chlorobium tepidum).